The chain runs to 54 residues: Large ribosomal subunit protein bL33A (54 aa).

This sequence belongs to the bacterial ribosomal protein bL33 family.

The polypeptide is Large ribosomal subunit protein bL33A (Mycobacteroides abscessus (strain ATCC 19977 / DSM 44196 / CCUG 20993 / CIP 104536 / JCM 13569 / NCTC 13031 / TMC 1543 / L948) (Mycobacterium abscessus)).